The chain runs to 52 residues: Alpha-crystallin B chain (52 aa).

It belongs to the small heat shock protein (HSP20) family. Homodimer. Aggregates with homologous proteins, including alpha-A-crystallin and the small heat shock protein HSPB1, to form large heteromeric complexes.

May contribute to the transparency and refractive index of the lens. The protein is Alpha-crystallin B chain (CRYAB) of Trachemys scripta elegans (Red-eared slider turtle).